The chain runs to 232 residues: Peptidyl-prolyl cis-trans isomerase CYP26-1 (232 aa).

The PPIase cyclophilin-type domain occupies 7–166 (FFDLTVDGKP…KPVVIADCGE (160 aa)). N108 is a glycosylation site (N-linked (GlcNAc...) asparagine). A helical transmembrane segment spans residues 212-232 (YYLINIVVACMVLMCFWSWFV).

It belongs to the cyclophilin-type PPIase family. In terms of tissue distribution, expressed only in flowers.

Its subcellular location is the membrane. It catalyses the reaction [protein]-peptidylproline (omega=180) = [protein]-peptidylproline (omega=0). In terms of biological role, PPIases accelerate the folding of proteins. It catalyzes the cis-trans isomerization of proline imidic peptide bonds in oligopeptides. This is Peptidyl-prolyl cis-trans isomerase CYP26-1 (CYP26-1) from Arabidopsis thaliana (Mouse-ear cress).